The primary structure comprises 267 residues: Phosphatidylcholine synthase (267 aa).

Residues 1-42 lie on the Cytoplasmic side of the membrane; it reads MILWRIVRPGAAMAYVQTGLVLIAEAMDTQQDSLKPRPAMRA. Residues 43 to 63 traverse the membrane as a helical segment; it reads AAFSVHVFTAFGAAIALLAML. The Periplasmic portion of the chain corresponds to 64–69; the sequence is EAVREH. Residues 70-90 form a helical membrane-spanning segment; that stretch reads WAAMFQWLGVALIIDAIDGPI. Residues 91–102 lie on the Cytoplasmic side of the membrane; that stretch reads ARRLDVKNVQPN. A helical membrane pass occupies residues 103-123; the sequence is WSGDVLDLVVDFVTYVFVPAY. A topological domain (periplasmic) is located at residue alanine 124. The chain crosses the membrane as a helical span at residues 125 to 145; that stretch reads IVASGLLLPVAAPLLGVAIIV. Residues 146–162 are Cytoplasmic-facing; sequence TSALYFADLRMKADDNH. The helical transmembrane segment at 163–183 threads the bilayer; that stretch reads FRGFPALWNAAAFYLFLLHWP. Position 184 (proline 184) is a topological domain, periplasmic. A helical transmembrane segment spans residues 185-205; the sequence is LWSTLLVAALVVLTFVPFHVL. The Cytoplasmic portion of the chain corresponds to 206–215; sequence HPVRVVRLRW. Residues 216 to 236 traverse the membrane as a helical segment; the sequence is LTMSLIGIWAVLSLYTLDMDF. Topologically, residues 237-239 are periplasmic; that stretch reads RVG. The helical transmembrane segment at 240-260 threads the bilayer; sequence PGVTLALCAIALWISFSDALI. Residues 261–267 lie on the Cytoplasmic side of the membrane; it reads RFARSFA.

This sequence belongs to the CDP-alcohol phosphatidyltransferase class-I family. Mn(2+) serves as cofactor.

It localises to the cell inner membrane. It catalyses the reaction a CDP-1,2-diacyl-sn-glycerol + choline = a 1,2-diacyl-sn-glycero-3-phosphocholine + CMP + H(+). Its function is as follows. Condenses choline with CDP-diglyceride to produce phosphatidylcholine and CMP. The protein is Phosphatidylcholine synthase of Bradyrhizobium diazoefficiens (strain JCM 10833 / BCRC 13528 / IAM 13628 / NBRC 14792 / USDA 110).